The sequence spans 411 residues: DSEFAELKIRGKIFKLPILKASIGEDVIDISRVSAEADCFTYDPGFMSTASCQSTITYIDGDKGILRHRGYDIKDLAEKSDFLEVAYLLIYGELPSGEQYNNFTKQVAHHSLVNERLHYLFQTFCSSSHPMAIMLAAVGSLSAFYPDLLNFKEADYELTAIRMIAKIPTIAAMSYKYSIGQPFIYPDNPLDFTENFLHMMFATPCTKYTVNPIIKNALNKIFILHADHEQNASTSTVRIAGSSGANPFACISTGIASLWGPAHGGANEAVINMLKEIGSSEYIPKYIAKAKDKNDPFRLMGFGHRVYKNYDPRAAVLKETCKEVLKALGQLDNNPLLQIAIELEAIALKDEYFIERKLYPNVDFYSGIIYKAMGIPSQMFTVLFAIARTVGWMAQWKEMHEDPEQKISRPR.

Catalysis depends on residues histidine 304 and aspartate 363.

This sequence belongs to the citrate synthase family.

The enzyme catalyses oxaloacetate + acetyl-CoA + H2O = citrate + CoA + H(+). It functions in the pathway carbohydrate metabolism; tricarboxylic acid cycle; isocitrate from oxaloacetate: step 1/2. The chain is Citrate synthase (gltA) from Rickettsia conorii subsp. caspia (strain A-167) (Astrakhan rickettsia).